The following is a 56-amino-acid chain: Small ribosomal subunit protein uS14 (56 aa).

Zn(2+) is bound by residues Cys21, Cys24, Cys39, and Cys42.

Belongs to the universal ribosomal protein uS14 family. In terms of assembly, component of the 40S small ribosomal subunit. The cofactor is Zn(2+).

It is found in the cytoplasm. The protein localises to the cytosol. The protein resides in the rough endoplasmic reticulum. The sequence is that of Small ribosomal subunit protein uS14 (RpS29) from Plutella xylostella (Diamondback moth).